The primary structure comprises 161 residues: 3-isopropylmalate dehydratase small subunit (161 aa).

Belongs to the LeuD family. LeuD type 2 subfamily. In terms of assembly, heterodimer of LeuC and LeuD.

The enzyme catalyses (2R,3S)-3-isopropylmalate = (2S)-2-isopropylmalate. It functions in the pathway amino-acid biosynthesis; L-leucine biosynthesis; L-leucine from 3-methyl-2-oxobutanoate: step 2/4. Catalyzes the isomerization between 2-isopropylmalate and 3-isopropylmalate, via the formation of 2-isopropylmaleate. The sequence is that of 3-isopropylmalate dehydratase small subunit from Pyrobaculum calidifontis (strain DSM 21063 / JCM 11548 / VA1).